The sequence spans 319 residues: MKKSITTLDLNLLLCLQLLMQERSVTKAAKRMNVTPSAVSKSLAKLRAWFDDPLFVNSPLGLSPTPLMVSMEQNLAEWMQMSNLLLDKPHHQTPRGLKFELAAESPLMMIMLNALSKRIYQRYPQATIKLRNWDYDSLDAITRGEVDIGFSGRESHPRSRELLSSLPLAIDYEVLFSDVPCVWLRKDHPALHETWNLDTFLRYPHISICWEQSDTWALDNVLQELGRERTIAMSLPEFEQSLFMAAQPDNLLLATAPRYCQYYNQLHQLPLVALPLPFDESQQKKLEVPFTLLWHKRNSHNPKIVWLRETIKHLYASMA.

An HTH lysR-type domain is found at 8-65 (LDLNLLLCLQLLMQERSVTKAAKRMNVTPSAVSKSLAKLRAWFDDPLFVNSPLGLSPT). The H-T-H motif DNA-binding region spans 25–44 (VTKAAKRMNVTPSAVSKSLA).

This sequence belongs to the LysR transcriptional regulatory family.

Functionally, involved in anaerobic NO protection. This Escherichia coli O17:K52:H18 (strain UMN026 / ExPEC) protein is HTH-type transcriptional regulator YidZ.